Reading from the N-terminus, the 192-residue chain is Anthranilate synthase component 2 (192 aa).

A Glutamine amidotransferase type-1 domain is found at 3 to 192; that stretch reads DILLLDNIDS…LEQTLAWALA (190 aa). 57 to 59 is an L-glutamine binding site; sequence GPG. The active-site Nucleophile; for GATase activity is C84. L-glutamine contacts are provided by residues Q88 and 134-135; that span reads SL. Residues H170 and E172 each act as for GATase activity in the active site.

Heterotetramer consisting of two non-identical subunits: a beta subunit (TrpG) and a large alpha subunit (TrpE).

The catalysed reaction is chorismate + L-glutamine = anthranilate + pyruvate + L-glutamate + H(+). It participates in amino-acid biosynthesis; L-tryptophan biosynthesis; L-tryptophan from chorismate: step 1/5. Functionally, part of a heterotetrameric complex that catalyzes the two-step biosynthesis of anthranilate, an intermediate in the biosynthesis of L-tryptophan. In the first step, the glutamine-binding beta subunit (TrpG) of anthranilate synthase (AS) provides the glutamine amidotransferase activity which generates ammonia as a substrate that, along with chorismate, is used in the second step, catalyzed by the large alpha subunit of AS (TrpE) to produce anthranilate. In the absence of TrpG, TrpE can synthesize anthranilate directly from chorismate and high concentrations of ammonia. This is Anthranilate synthase component 2 (trpG) from Yersinia pestis.